Here is a 76-residue protein sequence, read N- to C-terminus: Defensin-like protein 125 (76 aa).

Positions 1 to 25 (MTKAITLAIFMVVLVLGMVTKETQG) are cleaved as a signal peptide. Cystine bridges form between cysteine 30/cysteine 74, cysteine 41/cysteine 60, cysteine 46/cysteine 68, and cysteine 50/cysteine 70.

It belongs to the DEFL family.

It localises to the secreted. The sequence is that of Defensin-like protein 125 (LCR54) from Arabidopsis thaliana (Mouse-ear cress).